The primary structure comprises 215 residues: Calmodulin-like protein 5 (215 aa).

A disordered region spans residues 38 to 61 (KNSPPSPSTMLPSPSSSSAPTKRI). Residues 45 to 57 (STMLPSPSSSSAP) show a composition bias toward low complexity. EF-hand domains follow at residues 61-96 (IDPS…LGIY), 97-132 (IPDK…IVDE), 139-174 (TEEE…LGLK), and 177-212 (KTLD…GGFS). Ca(2+) is bound by residues D74, N76, D78, R80, E85, D110, N112, D114, C116, E121, D152, D154, D156, E163, D190, D192, D194, R196, and E201.

Belongs to the calmodulin family.

Potential calcium sensor. The sequence is that of Calmodulin-like protein 5 (CML5) from Arabidopsis thaliana (Mouse-ear cress).